The following is a 245-amino-acid chain: DNA polymerase sliding clamp (245 aa).

It belongs to the PCNA family. In terms of assembly, homotrimer. The subunits circularize to form a toroid; DNA passes through its center. Replication factor C (RFC) is required to load the toroid on the DNA.

In terms of biological role, sliding clamp subunit that acts as a moving platform for DNA processing. Responsible for tethering the catalytic subunit of DNA polymerase and other proteins to DNA during high-speed replication. This chain is DNA polymerase sliding clamp, found in Methanococcoides burtonii (strain DSM 6242 / NBRC 107633 / OCM 468 / ACE-M).